Here is an 844-residue protein sequence, read N- to C-terminus: 3',5'-cyclic-AMP phosphodiesterase 4A (844 aa).

The interval 1 to 124 is disordered; the sequence is MEPPAAPSER…RSPLDSQASP (124 aa). Phosphoserine is present on S13. Low complexity predominate over residues 36–46; sequence QPRTPIRIQQR. Over residues 51–78 the composition is skewed to basic and acidic residues; that stretch reads SAERSETERSPHRPIERADAVDTGDRPG. The span at 82 to 91 shows a compositional bias: polar residues; sequence TRMSWPSSFH. A Phosphoserine; by MAPKAPK2 modification is found at S147. A phosphoserine mark is found at S152, S160, and S204. The tract at residues 296 to 317 is disordered; sequence PSPTPRQRAFQQPPPSVLRQSQ. Position 333 is a phosphoserine (S333). Positions 343-672 constitute a PDEase domain; sequence VKTDQEDLLA…DWYHSAIRQS (330 aa). K344 participates in a covalent cross-link: Glycyl lysine isopeptide (Lys-Gly) (interchain with G-Cter in SUMO). The active-site Proton donor is the H419. H419 contributes to the 3',5'-cyclic AMP binding site. AMP contacts are provided by H419 and H423. Zn(2+) is bound by residues H423, H459, D460, and D577. Residues D460, D577, Q628, and F631 each coordinate AMP. A Mg(2+)-binding site is contributed by D460. D460 serves as a coordination point for Mn(2+). The 3',5'-cyclic AMP site is built by Q628 and F631. Disordered regions lie at residues 668–690 and 818–844; these read AIRQ…PSLP and SACS…GDPA. S672 and S674 each carry phosphoserine. Residues 820 to 830 show a composition bias toward polar residues; it reads CSGTSGDNSAI.

The protein belongs to the cyclic nucleotide phosphodiesterase family. PDE4 subfamily. In terms of assembly, interacts with LYN (via SH3 domain). Interacts with ARRB2. Zn(2+) is required as a cofactor. The cofactor is Mg(2+). Requires Mn(2+) as cofactor. Phosphorylated by MAPKAPK2 at Ser-147; it counteracts PKA-induced activation of PDE4A and modulates intracellular cAMP levels. Likely involved in cellular desensitization to cAMP signaling. In terms of processing, proteolytically cleaved by CASP3. In terms of tissue distribution, isoform 2 is testis specific.

Its subcellular location is the cytoplasm. It localises to the cytosol. The protein resides in the membrane. The enzyme catalyses 3',5'-cyclic AMP + H2O = AMP + H(+). It functions in the pathway purine metabolism; 3',5'-cyclic AMP degradation; AMP from 3',5'-cyclic AMP: step 1/1. Inhibited by rolipram. Functionally, hydrolyzes the second messenger 3',5'-cyclic AMP (cAMP), which is a key regulator of many important physiological processes. Efficiently hydrolyzes cAMP. In Rattus norvegicus (Rat), this protein is 3',5'-cyclic-AMP phosphodiesterase 4A (Pde4a).